Here is a 129-residue protein sequence, read N- to C-terminus: Serum amyloid A-2 protein (129 aa).

The first 18 residues, M1–S18, serve as a signal peptide directing secretion. At Q19 the chain carries Pyrrolidone carboxylic acid. The segment at G92 to Y129 is disordered.

It belongs to the SAA family. As to quaternary structure, apolipoprotein of the HDL complex. In terms of tissue distribution, expressed by the liver; secreted in plasma.

The protein localises to the secreted. In terms of biological role, major acute phase reactant. This chain is Serum amyloid A-2 protein (SAA2P0DJI9), found in Neovison vison (American mink).